Consider the following 147-residue polypeptide: Small ribosomal subunit protein uS12 (147 aa).

It belongs to the universal ribosomal protein uS12 family. As to quaternary structure, part of the 30S ribosomal subunit.

In terms of biological role, with S4 and S5 plays an important role in translational accuracy. Located at the interface of the 30S and 50S subunits. This Methanococcus maripaludis (strain C5 / ATCC BAA-1333) protein is Small ribosomal subunit protein uS12.